The chain runs to 285 residues: Protein HtrL (285 aa).

This is Protein HtrL from Escherichia coli (strain K12).